The following is a 452-amino-acid chain: Retinoid-inducible serine carboxypeptidase (452 aa).

The signal sequence occupies residues 1-26 (MELALRRSPVPRWLLLLPLLLGLNAG). N-linked (GlcNAc...) asparagine glycosylation is found at N64 and N126. S167 is a catalytic residue. N362 carries an N-linked (GlcNAc...) asparagine glycan. Residues D371 and H431 contribute to the active site.

Belongs to the peptidase S10 family.

The protein localises to the secreted. Functionally, may be involved in vascular wall and kidney homeostasis. The protein is Retinoid-inducible serine carboxypeptidase (SCPEP1) of Homo sapiens (Human).